The following is a 377-amino-acid chain: MSTPALLVLADGSVFHGTSIGYEGSTSGEVVFNTSMTGYQEILTDPSYCKQIVTLTYPHIGNTGTNAEDEESRSVYAAGLIIRDLPLLHSNFRASESLHDYLVRNKTVAIADIDTRRLTTLLREKGAQGGAILTGADATIEKAQELIAAFGSMVGKDLAKEVSCTETYEWTEGEWALGKGFVTPDEQPYHVVAYDFGVKTNILRMLASRGCRLTVVPAQTSAQDVLALNPDGVFLSNGPGDPEPCTYAIEAVQKLMESGKPIFGICLGHQLISLAIGAKTLKMRFSHHGANHPVQDLDSGKVVITSQNHGFAVDADTLPANARITHKSLFDNTLQGIELTDKPVFCFQGHPEASPGPQDVGYLFDKFIGNMKAAKRA.

The tract at residues 1–186 (MSTPALLVLA…LGKGFVTPDE (186 aa)) is CPSase. L-glutamine contacts are provided by Ser47, Gly238, and Gly240. The region spanning 190–377 (HVVAYDFGVK…IGNMKAAKRA (188 aa)) is the Glutamine amidotransferase type-1 domain. Cys266 serves as the catalytic Nucleophile. The L-glutamine site is built by Leu267, Gln270, Asn308, Gly310, and Phe311. Catalysis depends on residues His350 and Glu352.

The protein belongs to the CarA family. Composed of two chains; the small (or glutamine) chain promotes the hydrolysis of glutamine to ammonia, which is used by the large (or ammonia) chain to synthesize carbamoyl phosphate. Tetramer of heterodimers (alpha,beta)4.

It catalyses the reaction hydrogencarbonate + L-glutamine + 2 ATP + H2O = carbamoyl phosphate + L-glutamate + 2 ADP + phosphate + 2 H(+). It carries out the reaction L-glutamine + H2O = L-glutamate + NH4(+). The protein operates within amino-acid biosynthesis; L-arginine biosynthesis; carbamoyl phosphate from bicarbonate: step 1/1. It functions in the pathway pyrimidine metabolism; UMP biosynthesis via de novo pathway; (S)-dihydroorotate from bicarbonate: step 1/3. Functionally, small subunit of the glutamine-dependent carbamoyl phosphate synthetase (CPSase). CPSase catalyzes the formation of carbamoyl phosphate from the ammonia moiety of glutamine, carbonate, and phosphate donated by ATP, constituting the first step of 2 biosynthetic pathways, one leading to arginine and/or urea and the other to pyrimidine nucleotides. The small subunit (glutamine amidotransferase) binds and cleaves glutamine to supply the large subunit with the substrate ammonia. The protein is Carbamoyl phosphate synthase small chain of Neisseria meningitidis serogroup A / serotype 4A (strain DSM 15465 / Z2491).